Reading from the N-terminus, the 689-residue chain is Protein CFAP20DC (689 aa).

Disordered regions lie at residues 143 to 179 (GPPP…TVEK), 217 to 236 (LPIM…NNNR), 241 to 262 (LKST…NNTN), 333 to 424 (SKES…PSEL), and 583 to 660 (SIST…LSVE). Residues 150–176 (RRSNMRISSETVRSVGSKNNRSCQPST) show a composition bias toward polar residues. Residues 343–359 (EESQSVPKDIFTFSSRP) show a composition bias toward polar residues. The segment covering 394 to 405 (SEDDFYGGDSSE) has biased composition (acidic residues). A compositionally biased stretch (polar residues) spans 411–421 (IQGSRGPTTGP). Low complexity predominate over residues 583 to 593 (SISTSSDDTTT).

This Macaca fascicularis (Crab-eating macaque) protein is Protein CFAP20DC (CFAP20DC).